A 2753-amino-acid polypeptide reads, in one-letter code: Maltase-glucoamylase (2753 aa).

The Cytoplasmic portion of the chain corresponds to 1 to 13; the sequence is MARKKLKKFTTLE. Residues 14-34 form a helical; Signal-anchor for type II membrane protein membrane-spanning segment; sequence IVLSVLLLVLFIISIVLIVLL. At 35–2753 the chain is on the lumenal side; it reads AKESLKSTAP…FTSLTWISTL (2719 aa). Residues 41-87 form a disordered region; sequence STAPDPGTTGTPDPGTTGTPDPGTTGTTHARTTGPPDPGTTGTTPVS. A compositionally biased stretch (low complexity) spans 44 to 85; the sequence is PDPGTTGTPDPGTTGTPDPGTTGTTHARTTGPPDPGTTGTTP. One can recognise a P-type 1 domain in the interval 88 to 134; the sequence is AECPVVNELERINCIPDQPPTKATCDQRGCCWNPQGAVSVPWCYYSK. 3 disulfide bridges follow: C90-C118, C101-C117, and C112-C130. N135 is a glycosylation site (N-linked (GlcNAc...) asparagine). An acarbose-binding site is contributed by D289. N295 carries N-linked (GlcNAc...) asparagine glycosylation. The interval 356–737 is maltase; it reads PEQVVQEYLE…FRAHSRGDTV (382 aa). Residue D413 coordinates acarbose. Sulfotyrosine occurs at positions 416 and 425. 3 N-linked (GlcNAc...) asparagine glycosylation sites follow: N457, N458, and N479. D529 (nucleophile) is an active-site residue. E532 is an active-site residue. Positions 612 and 628 each coordinate acarbose. A disulfide bridge connects residues C659 and C670. An acarbose-binding site is contributed by H686. 8 N-linked (GlcNAc...) asparagine glycosylation sites follow: N707, N749, N827, N885, N912, N977, N989, and N1255. One can recognise a P-type 2 domain in the interval 954 to 1000; it reads WSIKIRDEEKIDCYPDENGASAENCTARGCIWEASNSSGVPFCYFVN. Disulfide bonds link C966–C983 and C978–C996. The tract at residues 1221-1632 is glucoamylase; the sequence is TPELVTQQYT…MQKAHTEGVT (412 aa). Y1282 bears the Sulfotyrosine mark. Residues N1323, N1364, and N1388 are each glycosylated (N-linked (GlcNAc...) asparagine). D1420 functions as the Nucleophile in the catalytic mechanism. E1423 is an active-site residue. The Proton donor role is filled by D1526. One can recognise a P-type 3 domain in the interval 1850-1896; sequence WSIKIRDEEKIDCYPDENGDSAENCTARGCIWEASNSSGVPFCYFVN. 2 disulfide bridges follow: C1862–C1879 and C1874–C1892. N-linked (GlcNAc...) asparagine glycans are attached at residues N2499, N2568, N2738, and N2743.

This sequence belongs to the glycosyl hydrolase 31 family. Monomer. Post-translationally, N- and O-glycosylated. Does not undergo intracellular or extracellular proteolytic cleavage. In terms of processing, sulfated. Broadly expressed. Highly expressed in small intestine. Expressed in granulocytes.

The protein resides in the apical cell membrane. It carries out the reaction Hydrolysis of terminal, non-reducing (1-&gt;4)-linked alpha-D-glucose residues with release of alpha-D-glucose.. The catalysed reaction is D-maltoheptaose + H2O = D-maltohexaose + alpha-D-glucose. It catalyses the reaction D-maltohexaose + H2O = D-maltopentaose + alpha-D-glucose. The enzyme catalyses D-maltopentaose + H2O = D-maltotetraose + alpha-D-glucose. It carries out the reaction D-maltotetraose + H2O = D-maltotriose + alpha-D-glucose. The catalysed reaction is D-maltotriose + H2O = D-maltose + alpha-D-glucose. It catalyses the reaction D-maltose + H2O = alpha-D-glucose + D-glucose. The enzyme catalyses nigerose + H2O = alpha-D-glucose + D-glucose. It carries out the reaction kojibiose + H2O = alpha-D-glucose + D-glucose. The catalysed reaction is isomaltose + H2O = alpha-D-glucose + D-glucose. It catalyses the reaction 6-O-alpha-D-glucopyranosyl-D-fructose + H2O = alpha-D-glucose + D-fructose. Its pathway is carbohydrate degradation. Down-regulated at high oligomaltose concentration as it occurs during the mealtime. Down-regulated by anti-diabetic drug acarbose. In terms of biological role, alpha-(1,4) exo-glucosidase involved in breakdown of dietary starch oligosaccharides in small intestine. Cleaves the non-reducing alpha-(1,4)-linked glucose residue in linear dextrins with retention of anomeric center stereochemistry. Mainly hydrolyzes short length oligomaltoses having two to seven glucose residues. Can cleave alpha-(1,2), alpha-(1,3) and alpha-(1,6) glycosidic linkages with lower efficiency, whereas beta glycosidic linkages are usually not hydrolyzed. This chain is Maltase-glucoamylase, found in Homo sapiens (Human).